Here is a 472-residue protein sequence, read N- to C-terminus: Divalent metal cation transporter MntH (472 aa).

A run of 11 helical transmembrane segments spans residues 59–79 (LLAF…PGNW), 92–112 (MLLS…ALAA), 144–164 (LAII…LNLL), 167–187 (VPII…LLLM), 196–216 (AFVI…IVLA), 233–253 (VVAD…TVMP), 288–308 (LALM…AAVF), 325–345 (LLAP…ALLA), 377–397 (VLTR…YGEQ), 402–422 (LLLL…IPLL), and 439–459 (WLMV…VKLL).

It belongs to the NRAMP family.

The protein localises to the cell inner membrane. Functionally, h(+)-stimulated, divalent metal cation uptake system. The polypeptide is Divalent metal cation transporter MntH (Xylella fastidiosa (strain Temecula1 / ATCC 700964)).